A 185-amino-acid polypeptide reads, in one-letter code: Ribosome-recycling factor (185 aa).

Belongs to the RRF family.

The protein resides in the cytoplasm. Its function is as follows. Responsible for the release of ribosomes from messenger RNA at the termination of protein biosynthesis. May increase the efficiency of translation by recycling ribosomes from one round of translation to another. The polypeptide is Ribosome-recycling factor (Acidothermus cellulolyticus (strain ATCC 43068 / DSM 8971 / 11B)).